A 72-amino-acid chain; its full sequence is Translation initiation factor IF-1 (72 aa).

One can recognise an S1-like domain in the interval 1 to 72; sequence MAKEDSIEME…SKGRIVYRAR (72 aa).

The protein belongs to the IF-1 family. As to quaternary structure, component of the 30S ribosomal translation pre-initiation complex which assembles on the 30S ribosome in the order IF-2 and IF-3, IF-1 and N-formylmethionyl-tRNA(fMet); mRNA recruitment can occur at any time during PIC assembly.

It is found in the cytoplasm. Functionally, one of the essential components for the initiation of protein synthesis. Stabilizes the binding of IF-2 and IF-3 on the 30S subunit to which N-formylmethionyl-tRNA(fMet) subsequently binds. Helps modulate mRNA selection, yielding the 30S pre-initiation complex (PIC). Upon addition of the 50S ribosomal subunit IF-1, IF-2 and IF-3 are released leaving the mature 70S translation initiation complex. In Nitrosococcus oceani (strain ATCC 19707 / BCRC 17464 / JCM 30415 / NCIMB 11848 / C-107), this protein is Translation initiation factor IF-1.